We begin with the raw amino-acid sequence, 271 residues long: WUSCHEL-related homeobox 6 (271 aa).

The segment at residues 57-121 (AATLRWNPTP…NHKARERLKR (65 aa)) is a DNA-binding region (homeobox; WUS-type). The segment at 118-195 (RLKRRRREGG…TEESDQRASE (78 aa)) is disordered. Composition is skewed to basic and acidic residues over residues 132–148 (PHKDVKDSSSGGHRVDQ) and 180–195 (NEDHGTTEESDQRASE).

This sequence belongs to the WUS homeobox family. Highly expressed in developing ovules. Present in developing primordia and differentiating organs but absent in mature organs.

Its subcellular location is the nucleus. In terms of biological role, transcription factor that plays a central role in ovule patterning by regulating cell proliferation of the maternal integuments and differentiation of the maegaspore mother cell (MCC). Involved in AGAMOUS (AG) repression in leaves. This is WUSCHEL-related homeobox 6 (WOX6) from Arabidopsis thaliana (Mouse-ear cress).